The chain runs to 328 residues: Solute-binding protein Bamb_6123 (328 aa).

An N-terminal signal peptide occupies residues 1-26; the sequence is MTHRFPRSRTALAVALMAGFAMSAQA. Beta-D-galacturonate contacts are provided by His-35, Glu-73, Arg-89, Arg-149, Asn-209, and Glu-236. Positions 35, 73, 89, 149, 209, and 236 each coordinate beta-D-glucuronate.

Belongs to the bacterial solute-binding protein 7 family. As to quaternary structure, the complex is comprised of an extracytoplasmic solute-binding protein and a heteromeric permease formed by two transmembrane proteins.

Its subcellular location is the periplasm. Functionally, solute-binding protein that binds D-galacturonate and D-glucuronate (in vitro). Probably part of a tripartite ATP-independent periplasmic (TRAP) transport system that mediates solute transport into the cytoplasm. This is Solute-binding protein Bamb_6123 from Burkholderia ambifaria (strain ATCC BAA-244 / DSM 16087 / CCUG 44356 / LMG 19182 / AMMD) (Burkholderia cepacia (strain AMMD)).